Consider the following 274-residue polypeptide: Type II restriction enzyme HgiEI (274 aa).

The protein belongs to the TdeIII type II restriction endonuclease family.

The enzyme catalyses Endonucleolytic cleavage of DNA to give specific double-stranded fragments with terminal 5'-phosphates.. In terms of biological role, a P subtype restriction enzyme that recognizes the double-stranded sequence 5'-GGWCC-3' and cleaves after G-1. This system is more active than isoschizomeric RM.HgiBI. The chain is Type II restriction enzyme HgiEI from Herpetosiphon aurantiacus (Herpetosiphon giganteus).